The primary structure comprises 318 residues: Cytochrome f (318 aa).

The signal sequence occupies residues 1–34; it reads MQNRNFFEYPKNWIILLIPIFTTFNLLFTSDCYA. The heme site is built by phenylalanine 35, cysteine 55, cysteine 58, and histidine 59. A helical membrane pass occupies residues 284-303; the sequence is LQGLLVFLFLVVLAQVFLVL.

The protein belongs to the cytochrome f family. As to quaternary structure, the 4 large subunits of the cytochrome b6-f complex are cytochrome b6, subunit IV (17 kDa polypeptide, petD), cytochrome f and the Rieske protein, while the 4 small subunits are PetG, PetL, PetM and PetN. The complex functions as a dimer. It depends on heme as a cofactor.

It is found in the plastid. Its subcellular location is the chloroplast thylakoid membrane. In terms of biological role, component of the cytochrome b6-f complex, which mediates electron transfer between photosystem II (PSII) and photosystem I (PSI), cyclic electron flow around PSI, and state transitions. The polypeptide is Cytochrome f (Chaetosphaeridium globosum (Charophycean green alga)).